A 299-amino-acid polypeptide reads, in one-letter code: UTP--glucose-1-phosphate uridylyltransferase 1 (299 aa).

It belongs to the UDPGP type 2 family.

It catalyses the reaction alpha-D-glucose 1-phosphate + UTP + H(+) = UDP-alpha-D-glucose + diphosphate. It participates in carbohydrate metabolism; nucleotide-sugar metabolism. The chain is UTP--glucose-1-phosphate uridylyltransferase 1 (hasC1) from Streptococcus pyogenes serotype M6 (strain ATCC BAA-946 / MGAS10394).